The following is a 318-amino-acid chain: NADH-ubiquinone oxidoreductase chain 1 (318 aa).

8 consecutive transmembrane segments (helical) span residues 2–22 (FLINVLTVTLPILPAVAFLTL), 69–89 (FLFTVAPILALTLALTVWAPL), 102–122 (LLFILAMSSLMVYSILWSGWA), 146–166 (MTTITLSMVLMNGSFTLTAFA), 171–191 (HLWLIFPMWPLMMMWFTSTLA), 222–242 (LFFMAEYANIIMMNALTVILF), 253–273 (EISTINFVMKTIILTICFLWV), and 294–314 (LPLTLALCMWHISILISLACI).

It belongs to the complex I subunit 1 family. As to quaternary structure, core subunit of respiratory chain NADH dehydrogenase (Complex I) which is composed of 45 different subunits.

It is found in the mitochondrion inner membrane. The catalysed reaction is a ubiquinone + NADH + 5 H(+)(in) = a ubiquinol + NAD(+) + 4 H(+)(out). Functionally, core subunit of the mitochondrial membrane respiratory chain NADH dehydrogenase (Complex I) which catalyzes electron transfer from NADH through the respiratory chain, using ubiquinone as an electron acceptor. Essential for the catalytic activity and assembly of complex I. This Elephas maximus (Indian elephant) protein is NADH-ubiquinone oxidoreductase chain 1 (MT-ND1).